The following is a 313-amino-acid chain: tRNA dimethylallyltransferase (313 aa).

Residue glycine 10–threonine 17 participates in ATP binding. A substrate-binding site is contributed by threonine 12 to threonine 17. Interaction with substrate tRNA stretches follow at residues aspartate 35–methionine 38, glutamine 159–arginine 163, and arginine 240–arginine 245.

This sequence belongs to the IPP transferase family. Monomer. Mg(2+) is required as a cofactor.

The catalysed reaction is adenosine(37) in tRNA + dimethylallyl diphosphate = N(6)-dimethylallyladenosine(37) in tRNA + diphosphate. Functionally, catalyzes the transfer of a dimethylallyl group onto the adenine at position 37 in tRNAs that read codons beginning with uridine, leading to the formation of N6-(dimethylallyl)adenosine (i(6)A). This is tRNA dimethylallyltransferase from Legionella pneumophila (strain Corby).